The following is a 150-amino-acid chain: Putative HTH-type transcriptional regulator rrf2-like (150 aa).

The HTH rrf2-type domain occupies 1–139; it reads MITQKMKYAL…DSLTLEDMLA (139 aa).

This Rhodobacter capsulatus (strain ATCC BAA-309 / NBRC 16581 / SB1003) protein is Putative HTH-type transcriptional regulator rrf2-like.